Reading from the N-terminus, the 138-residue chain is uncharacterized protein (138 aa).

The chain crosses the membrane as a helical span at residues 19 to 40 (ECKVSVISFFLLAFLLMAHIWL). Repeat copies occupy residues 94–106 (KGEI…KKEG), 107–119 (KGEI…KKEG), and 120–132 (KGEI…KKEV). Positions 94 to 132 (KGEIEGKEEKKEGKGEIEGKEEKKEGKGEIEGKEEKKEV) are 3 X 13 AA tandem repeats of K-G-E-I-E-G-K-E-E-K-K-E-[GV]. The interval 98 to 138 (EGKEEKKEGKGEIEGKEEKKEGKGEIEGKEEKKEVENGPRK) is disordered.

As to expression, expressed in roots, leaves and flowers.

It localises to the mitochondrion membrane. Its function is as follows. Involved in cytoplasmic male sterility (CMS) by leading to pollen abortion. Not expressed in fertile (normal) plants. This is an uncharacterized protein from Raphanus sativus (Radish).